Reading from the N-terminus, the 28-residue chain is Cycloviolin-B (28 aa).

The cyclopeptide (Gly-Asn) cross-link spans 1-28 (GTACGESCYVLPCFTVGCTCTSSQCFKN). Intrachain disulfides connect C4/C18, C8/C20, and C13/C25.

Post-translationally, this is a cyclic peptide.

Functionally, probably participates in a plant defense mechanism. Has anti-HIV activity. This chain is Cycloviolin-B, found in Leonia cymosa (Sacha uba).